We begin with the raw amino-acid sequence, 230 residues long: Large ribosomal subunit protein uL1 (230 aa).

It belongs to the universal ribosomal protein uL1 family. As to quaternary structure, part of the 50S ribosomal subunit.

In terms of biological role, binds directly to 23S rRNA. The L1 stalk is quite mobile in the ribosome, and is involved in E site tRNA release. Protein L1 is also a translational repressor protein, it controls the translation of the L11 operon by binding to its mRNA. This is Large ribosomal subunit protein uL1 from Onion yellows phytoplasma (strain OY-M).